Reading from the N-terminus, the 477-residue chain is Inner membrane transporter YgjI (477 aa).

Topologically, residues 1–8 are periplasmic; that stretch reads MSDTKRNT. Residues 9–29 traverse the membrane as a helical segment; that stretch reads IGKFGLLSLTFAAVYSFNNVI. Residues 30 to 41 are Cytoplasmic-facing; sequence NNNIELGLASAP. A helical membrane pass occupies residues 42-62; sequence MFFLATIFYFIPFCLIIAEFV. Topologically, residues 63–83 are periplasmic; the sequence is SLNKNSEAGVYAWVKSSLGGR. A helical membrane pass occupies residues 84 to 104; the sequence is WAFITAYTYWFVNLFFFTSLL. Over 105–120 the chain is Cytoplasmic; the sequence is PRVIAYASYAFLGYEY. Residues 121-141 form a helical membrane-spanning segment; that stretch reads IMTPVATTIISMVLFAFSTWV. The Periplasmic portion of the chain corresponds to 142–158; sequence STNGAKMLGPITSVTST. The chain crosses the membrane as a helical span at residues 159–179; that stretch reads LMLLLTLSYILLAGTALVGGV. Residues 180-196 are Cytoplasmic-facing; that stretch reads QPADAITVDAMIPNFNW. Residues 197 to 217 form a helical membrane-spanning segment; that stretch reads AFLGVTTWIFMAAGGAESVAV. The Periplasmic portion of the chain corresponds to 218-232; sequence YVNDVKGGSKSFVKV. Residues 233–253 form a helical membrane-spanning segment; that stretch reads IILAGIFIGVLYSVSSVLINV. The Cytoplasmic segment spans residues 254–263; that stretch reads FVSSKELKFT. The chain crosses the membrane as a helical span at residues 264-284; the sequence is GGSVQVFHGMAAYFGLPEALM. The Periplasmic segment spans residues 285–286; the sequence is NR. A helical membrane pass occupies residues 287–307; the sequence is FVGLVSFTAMFGSLLMWTATP. The Cytoplasmic portion of the chain corresponds to 308 to 335; sequence VKIFFSEIPEGIFGKKTVELNENGVPAR. Residues 336–356 traverse the membrane as a helical segment; it reads AAWIQFLIVIPLMIIPMLGSN. The Periplasmic segment spans residues 357 to 364; it reads TVQDLMNT. A helical membrane pass occupies residues 365 to 385; that stretch reads IINMTAAASMLPPLFIMLAYL. Residues 386 to 405 lie on the Cytoplasmic side of the membrane; the sequence is NLRAKLDHLPRDFRMGSRRT. Residues 406–426 traverse the membrane as a helical segment; sequence GIIVVSMLIAIFAVGFVASTF. The Periplasmic portion of the chain corresponds to 427-431; it reads PTGAN. A helical membrane pass occupies residues 432-452; it reads ILTIIFYNVGGIVIFLGFAWW. The Cytoplasmic portion of the chain corresponds to 453–477; that stretch reads KYSKYIKGLTAEERHIEATPASNVD.

The protein belongs to the amino acid-polyamine-organocation (APC) superfamily.

The protein localises to the cell inner membrane. The polypeptide is Inner membrane transporter YgjI (ygjI) (Escherichia coli (strain K12)).